A 160-amino-acid polypeptide reads, in one-letter code: CXXC motif containing zinc binding protein (160 aa).

Residues Cys-33, Cys-36, Cys-67, and Cys-70 each contribute to the Zn(2+) site. A Phosphoserine modification is found at Ser-75.

Belongs to the UPF0587 family. As to quaternary structure, monomer.

In Rattus norvegicus (Rat), this protein is CXXC motif containing zinc binding protein.